Consider the following 491-residue polypeptide: Glutathione synthetase GSH2 (491 aa).

Residue R128 participates in substrate binding. An ATP-binding site is contributed by E146. Mg(2+) contacts are provided by E146 and N148. Substrate-binding positions include 150–153, 228–230, Q234, and 285–288; these read VSVS, ERN, and RTGY. Residues K324, 382-391, Y393, 415-418, and E442 each bind ATP; these read KPQREGGGNN and MELI. E386 lines the Mg(2+) pocket. A substrate-binding site is contributed by R467. 2 residues coordinate ATP: K469 and E475. 478-479 is a substrate binding site; the sequence is VA.

This sequence belongs to the eukaryotic GSH synthase family. As to quaternary structure, homodimer. Requires Mg(2+) as cofactor.

The catalysed reaction is gamma-L-glutamyl-L-cysteine + glycine + ATP = glutathione + ADP + phosphate + H(+). It participates in sulfur metabolism; glutathione biosynthesis; glutathione from L-cysteine and L-glutamate: step 2/2. This is Glutathione synthetase GSH2 (GSH2) from Saccharomyces cerevisiae (strain ATCC 204508 / S288c) (Baker's yeast).